We begin with the raw amino-acid sequence, 236 residues long: MSKNSKAYREAAEKIDAGRIYSPLEAANLVKETSSKNYDASIDVAIRLGVDPRKADQLVRGTVSLPNGTGKTVRVAVFAQGEKATEAEAAGADFVGTDELVEKIQGGWTDFDVAIATPDQMAKIGRIARVLGPRGLMPNPKTGTVTNDVAKAIEEVKGGKISFRVDKASNLHAAIGKASFDAKKLAENYGALLDEIIRIKPSSAKGIYVKRVTLSSTTGPGVEVDTHVTKNYAEEA.

Belongs to the universal ribosomal protein uL1 family. In terms of assembly, part of the 50S ribosomal subunit.

In terms of biological role, binds directly to 23S rRNA. The L1 stalk is quite mobile in the ribosome, and is involved in E site tRNA release. Its function is as follows. Protein L1 is also a translational repressor protein, it controls the translation of the L11 operon by binding to its mRNA. This Corynebacterium glutamicum (strain R) protein is Large ribosomal subunit protein uL1.